Here is an 878-residue protein sequence, read N- to C-terminus: Coatomer subunit gamma (878 aa).

6 HEAT repeats span residues 64 to 101 (REAT…VAED), 287 to 324 (RMLS…THPA), 326 to 359 (VTTC…GAES), 360 to 396 (SVER…KYPR), 399 to 434 (TVLM…ENAD), and 471 to 508 (ATPS…SCPA).

It belongs to the COPG family. As to quaternary structure, oligomeric complex that consists of at least the alpha, beta, beta', gamma, delta, epsilon and zeta subunits.

Its subcellular location is the cytoplasm. The protein resides in the golgi apparatus membrane. It is found in the cytoplasmic vesicle. The protein localises to the COPI-coated vesicle membrane. It localises to the endoplasmic reticulum. Functionally, the coatomer is a cytosolic protein complex that binds to dilysine motifs and reversibly associates with Golgi non-clathrin-coated vesicles, which further mediate biosynthetic protein transport from the ER, via the Golgi up to the trans Golgi network. Coatomer complex is required for budding from Golgi membranes, and is essential for the retrograde Golgi-to-ER transport of dilysine-tagged proteins. Required for limiting lipid storage in lipid droplets. Involved in the expansion of luminal extracellular matrices and apical membrane during tubulogenesis. Required in the tracheal epithelium for luminal protein secretion and diametric tube growth. In salivary glands, required for deposition of O-glycans and luminal extracellular matrix assembly. Required for epidermal morphogenesis and cuticle development. The polypeptide is Coatomer subunit gamma (Drosophila pseudoobscura pseudoobscura (Fruit fly)).